The sequence spans 942 residues: DNA mismatch repair protein MutS (942 aa).

Residue 613-620 (GPNMAGKS) coordinates ATP.

Belongs to the DNA mismatch repair MutS family.

Functionally, this protein is involved in the repair of mismatches in DNA. It is possible that it carries out the mismatch recognition step. This protein has a weak ATPase activity. The protein is DNA mismatch repair protein MutS of Clostridium botulinum (strain Eklund 17B / Type B).